Here is a 433-residue protein sequence, read N- to C-terminus: Glutamate-1-semialdehyde 2,1-aminomutase (433 aa).

The residue at position 271 (K271) is an N6-(pyridoxal phosphate)lysine.

This sequence belongs to the class-III pyridoxal-phosphate-dependent aminotransferase family. HemL subfamily. As to quaternary structure, homodimer. Pyridoxal 5'-phosphate serves as cofactor.

It localises to the cytoplasm. It carries out the reaction (S)-4-amino-5-oxopentanoate = 5-aminolevulinate. Its pathway is porphyrin-containing compound metabolism; protoporphyrin-IX biosynthesis; 5-aminolevulinate from L-glutamyl-tRNA(Glu): step 2/2. It participates in porphyrin-containing compound metabolism; chlorophyll biosynthesis. The protein is Glutamate-1-semialdehyde 2,1-aminomutase of Prochlorococcus marinus (strain MIT 9215).